Here is an 860-residue protein sequence, read N- to C-terminus: uncharacterized protein (860 aa).

Basic and acidic residues-rich tracts occupy residues 334–345 and 536–551; these read LEKKSLQSDSKN and EDQKVDSDKDGKLSDK. Disordered regions lie at residues 334-360, 530-551, 708-798, and 813-842; these read LEKKSLQSDSKNKKSQKRKKDEDLRKE, EEDDVSEDQKVDSDKDGKLSDK, ARKT…EDEF, and PFNETDDEEEIQTVDHSETHSHKKKKRKAI. Composition is skewed to acidic residues over residues 716 to 725, 738 to 750, and 813 to 824; these read DEEGEIDEDE, EMDEEESDFDSEE, and PFNETDDEEEIQ. Phosphoserine is present on residues serine 744 and serine 748.

The protein belongs to the CBF/MAK21 family.

This is an uncharacterized protein from Schizosaccharomyces pombe (strain 972 / ATCC 24843) (Fission yeast).